A 704-amino-acid chain; its full sequence is Conserved oligomeric Golgi complex subunit 6 (704 aa).

Belongs to the COG6 family.

It is found in the golgi apparatus membrane. Acts as a component of the peripheral membrane COG complex that is involved in intra-Golgi protein trafficking. COG is located at the cis-Golgi, and regulates tethering of retrograde intra-Golgi vesicles and possibly a number of other membrane trafficking events. The polypeptide is Conserved oligomeric Golgi complex subunit 6 (COG6) (Pyricularia oryzae (strain 70-15 / ATCC MYA-4617 / FGSC 8958) (Rice blast fungus)).